Reading from the N-terminus, the 124-residue chain is Desulfoferrodoxin homolog (124 aa).

Fe cation contacts are provided by Cys-10, Cys-13, Cys-29, Cys-30, His-49, His-69, His-75, Cys-117, and His-120.

Belongs to the desulfoferrodoxin family. It depends on Fe(3+) as a cofactor. The cofactor is Cu(2+).

This Methanothermobacter thermautotrophicus (strain ATCC 29096 / DSM 1053 / JCM 10044 / NBRC 100330 / Delta H) (Methanobacterium thermoautotrophicum) protein is Desulfoferrodoxin homolog.